The primary structure comprises 226 residues: MALSDADVQKQIKHMMAFIEQEANEKAEEIDAKAEEEFNIEKGRLVQTQRLKIMEYYEKKEKQIEQQKKIQMSNLMNQARLKVLRARDDLITDLLNEAKQRLSKVVKDTTRYQVLLDGLVLQGLYQLLEPRMIVRCRKQDFPLVKAAVQKAIPMYKIATKKDVDVQIDQEAYLPEEIAGGVEIYNGDRKIKVSNTLESRLDLIAQQMMPEVRGALFGANANRKFLD.

An N-acetylalanine modification is found at Ala-2. The residue at position 56 (Tyr-56) is a Phosphotyrosine.

The protein belongs to the V-ATPase E subunit family. In terms of assembly, V-ATPase is a heteromultimeric enzyme made up of two complexes: the ATP-hydrolytic V1 complex and the proton translocation V0 complex. The V1 complex consists of three catalytic AB heterodimers that form a heterohexamer, three peripheral stalks each consisting of EG heterodimers, one central rotor including subunits D and F, and the regulatory subunits C and H. The proton translocation complex V0 consists of the proton transport subunit a, a ring of proteolipid subunits c9c'', rotary subunit d, subunits e and f, and the accessory subunits ATP6AP1/Ac45 and ATP6AP2/PRR. Interacts with RABL2/RABL2A; binds preferentially to GTP-bound RABL2. Interacts with ALDOC. Interacts with RAB11B. Expressed within the midpiece of sperm tail (at protein level). Kidney; localizes to early distal nephron, encompassing thick ascending limbs and distal convoluted tubules (at protein level).

It localises to the apical cell membrane. It is found in the cytoplasmic vesicle. Its subcellular location is the secretory vesicle. The protein resides in the synaptic vesicle membrane. The protein localises to the clathrin-coated vesicle membrane. Its function is as follows. Subunit of the V1 complex of vacuolar(H+)-ATPase (V-ATPase), a multisubunit enzyme composed of a peripheral complex (V1) that hydrolyzes ATP and a membrane integral complex (V0) that translocates protons. V-ATPase is responsible for acidifying and maintaining the pH of intracellular compartments and in some cell types, is targeted to the plasma membrane, where it is responsible for acidifying the extracellular environment. The polypeptide is V-type proton ATPase subunit E 1 (Atp6v1e1) (Mus musculus (Mouse)).